The following is a 130-amino-acid chain: Small ribosomal subunit protein uS8 (130 aa).

This sequence belongs to the universal ribosomal protein uS8 family. In terms of assembly, part of the 30S ribosomal subunit. Contacts proteins S5 and S12.

Functionally, one of the primary rRNA binding proteins, it binds directly to 16S rRNA central domain where it helps coordinate assembly of the platform of the 30S subunit. This chain is Small ribosomal subunit protein uS8, found in Vibrio vulnificus (strain CMCP6).